Reading from the N-terminus, the 381-residue chain is Regulatory protein RapF (381 aa).

Mn(2+) contacts are provided by L40, M43, and E45. TPR repeat units follow at residues 101–137 (YYFN…VKDR), 148–181 (SESY…NIRL), 182–215 (LQCH…AEAE), 222–255 (GRTL…FEES), 262–295 (PQAY…SQKA), and 337–370 (EDFA…RQLI).

The protein belongs to the Rap family. As to quaternary structure, monomer. Is monomeric either alone or in complex with PhrF. Interacts specifically with the C-terminal DNA-binding domain of ComA. Interacts with PhrF.

The protein resides in the cytoplasm. Its activity is regulated as follows. Inhibited by PhrF, which prevents RapF-ComA interaction. Interaction with PhrF induces a conformational change in RapF, which is propagated to the ComA binding site and causes the dissociation of ComA from RapF. Functionally, involved in the regulation of genetic competence development. Inhibits the activity of ComA, a transcriptional factor that regulates the development of genetic competence. Acts by binding to ComA, leading to the inhibition of its DNA-binding activity. May also affect transcription independently of ComA. In Bacillus subtilis (strain 168), this protein is Regulatory protein RapF (rapF).